A 277-amino-acid polypeptide reads, in one-letter code: Polar tube protein 2 (277 aa).

The first 18 residues, 1 to 18 (MLLLLAITAVVSATMVHP), serve as a signal peptide directing secretion. A glycan (N-linked (GlcNAc...) asparagine) is linked at Asn134. Residues 237–251 (QKKEVKDTKEGEKSA) show a composition bias toward basic and acidic residues. Residues 237–277 (QKKEVKDTKEGEKSASQDSDGEGTAEDAEVQQPSADGEGLE) are disordered. A compositionally biased stretch (acidic residues) spans 255-265 (SDGEGTAEDAE).

Interacts with PTP1 and PTP3.

It is found in the spore polar tube. Its function is as follows. Involved in formation of a polar tube through which the infectious agent is passed on to the host cell. The chain is Polar tube protein 2 (PTP2) from Encephalitozoon cuniculi (strain GB-M1) (Microsporidian parasite).